A 165-amino-acid chain; its full sequence is Protein SprT (165 aa).

Positions 19-163 (REKLAQANLK…RCVKCGEPLV (145 aa)) constitute a SprT-like domain. H78 serves as a coordination point for Zn(2+). Residue E79 is part of the active site. Zn(2+) is bound at residue H82.

It belongs to the SprT family. Zn(2+) serves as cofactor.

The protein localises to the cytoplasm. The protein is Protein SprT of Enterobacter sp. (strain 638).